The primary structure comprises 628 residues: Isoleucine--tRNA ligase (628 aa).

Residues 505 to 509 carry the 'KMSKS' region motif; that stretch reads KMSKR. K508 provides a ligand contact to ATP.

The protein belongs to the class-I aminoacyl-tRNA synthetase family.

The enzyme catalyses tRNA(Ile) + L-isoleucine + ATP = L-isoleucyl-tRNA(Ile) + AMP + diphosphate. This Antonospora locustae (Microsporidian parasite) protein is Isoleucine--tRNA ligase.